Reading from the N-terminus, the 216-residue chain is Serine acetyltransferase (216 aa).

This sequence belongs to the transferase hexapeptide repeat family.

Its subcellular location is the cytoplasm. It carries out the reaction L-serine + acetyl-CoA = O-acetyl-L-serine + CoA. The protein operates within amino-acid biosynthesis; L-cysteine biosynthesis; L-cysteine from L-serine: step 1/2. With respect to regulation, inhibited by cysteine. Functionally, catalyzes the acetylation of serine by acetyl-CoA to produce O-acetylserine (OAS). This chain is Serine acetyltransferase, found in Bacillus licheniformis (strain ATCC 14580 / DSM 13 / JCM 2505 / CCUG 7422 / NBRC 12200 / NCIMB 9375 / NCTC 10341 / NRRL NRS-1264 / Gibson 46).